The primary structure comprises 268 residues: Riboflavin transport system permease protein RibX (268 aa).

A run of 6 helical transmembrane segments spans residues 24-44 (ALGL…GVTL), 76-96 (LATL…ALIL), 119-139 (AIPV…GLTS), 140-160 (KVLV…VVAI), 185-205 (VEAP…LALA), and 236-256 (LIFV…VLAG). The region spanning 75–255 (TLATLSAALG…LITLTLYVLA (181 aa)) is the ABC transmembrane type-1 domain.

This sequence belongs to the binding-protein-dependent transport system permease family. In terms of assembly, the complex is likely composed of an ATP-binding protein, a transmembrane protein (RibX) and a solute-binding protein (RibY).

The protein localises to the cell membrane. In terms of biological role, part of an ABC transporter complex that transports riboflavin into the cell. In Chloroflexus aurantiacus (strain ATCC 29366 / DSM 635 / J-10-fl), this protein is Riboflavin transport system permease protein RibX.